Consider the following 342-residue polypeptide: Heparan sulfate glucosamine 3-O-sulfotransferase 6 (342 aa).

The segment at Met-1 to Gln-21 is disordered. The Cytoplasmic segment spans residues Met-1 to Pro-31. A helical; Signal-anchor for type II membrane protein transmembrane segment spans residues Met-32 to Gly-49. Residues Arg-50 to Gly-342 are Lumenal-facing. The disordered stretch occupies residues Ala-55 to Pro-85. The segment covering Glu-66–Pro-85 has biased composition (low complexity). Residue Lys-100–Arg-104 participates in 3'-phosphoadenylyl sulfate binding. Substrate contacts are provided by residues Glu-122–Arg-128 and Lys-153–Ser-156. The 3'-phosphoadenylyl sulfate site is built by Arg-181 and Ser-189. Trp-220 to Ser-221 contributes to the substrate binding site. Asn-281 carries N-linked (GlcNAc...) asparagine glycosylation. Cys-288 and Cys-300 are oxidised to a cystine. Lys-305–His-309 is a binding site for 3'-phosphoadenylyl sulfate.

Belongs to the sulfotransferase 1 family.

It localises to the golgi apparatus membrane. The catalysed reaction is alpha-D-glucosaminyl-[heparan sulfate](n) + 3'-phosphoadenylyl sulfate = 3-sulfo-alpha-D-glucosaminyl-[heparan sulfate](n) + adenosine 3',5'-bisphosphate + H(+). Its function is as follows. Sulfotransferase that utilizes 3'-phospho-5'-adenylyl sulfate (PAPS) to catalyze the transfer of a sulfo group to heparan sulfate. The substrate-specific O-sulfation generates an enzyme-modified heparan sulfate which acts as a binding receptor to Herpes Simplex Virus-1 (HSV-1) and permits its entry. Unlike 3-OST-1, does not convert non-anticoagulant heparan sulfate to anticoagulant heparan sulfate. The polypeptide is Heparan sulfate glucosamine 3-O-sulfotransferase 6 (HS3ST6) (Homo sapiens (Human)).